The sequence spans 274 residues: MLFALPFPAIDPVLVEIGPFAIRWYALAYIVGLLGGWWYTRFLSRRSRPPVMSDADVDDLLVWATLGTILGGRLGYVVFYNAAHFLANPLEIPMLWHGGMSFHGGLVGVITATVLFCRSRRLSVARVGDLVALVAPLGLFFGRLANFINGELFGRPAPDVPWAMVFPHGGPLPRHPSQLYEATLEGLVLFCLLGLLWRFTALSRKPGQIIGLFLIGYGLSRITAEFFREPDAQIGFLALGVTMGQILSLPMILAGIVVFVVARRAKPLAVPGGR.

Transmembrane regions (helical) follow at residues 24–44, 60–80, 96–116, and 122–142; these read WYAL…RFLS, LLVW…VVFY, WHGG…TVLF, and LSVA…LFFG. An a 1,2-diacyl-sn-glycero-3-phospho-(1'-sn-glycerol)-binding site is contributed by R143. 3 helical membrane-spanning segments follow: residues 182-202, 207-227, and 241-261; these read ATLE…FTAL, GQII…AEFF, and VTMG…VFVV.

It belongs to the Lgt family.

It localises to the cell inner membrane. It catalyses the reaction L-cysteinyl-[prolipoprotein] + a 1,2-diacyl-sn-glycero-3-phospho-(1'-sn-glycerol) = an S-1,2-diacyl-sn-glyceryl-L-cysteinyl-[prolipoprotein] + sn-glycerol 1-phosphate + H(+). It functions in the pathway protein modification; lipoprotein biosynthesis (diacylglyceryl transfer). Functionally, catalyzes the transfer of the diacylglyceryl group from phosphatidylglycerol to the sulfhydryl group of the N-terminal cysteine of a prolipoprotein, the first step in the formation of mature lipoproteins. This chain is Phosphatidylglycerol--prolipoprotein diacylglyceryl transferase, found in Rhodospirillum rubrum (strain ATCC 11170 / ATH 1.1.1 / DSM 467 / LMG 4362 / NCIMB 8255 / S1).